A 123-amino-acid chain; its full sequence is Large ribosomal subunit protein uL18 (123 aa).

It belongs to the universal ribosomal protein uL18 family. In terms of assembly, part of the 50S ribosomal subunit; part of the 5S rRNA/L5/L18/L25 subcomplex. Contacts the 5S and 23S rRNAs.

In terms of biological role, this is one of the proteins that bind and probably mediate the attachment of the 5S RNA into the large ribosomal subunit, where it forms part of the central protuberance. The sequence is that of Large ribosomal subunit protein uL18 from Bifidobacterium adolescentis (strain ATCC 15703 / DSM 20083 / NCTC 11814 / E194a).